Here is a 416-residue protein sequence, read N- to C-terminus: MPPPPPNRREQATAAPSSTDKSETGAGAARKEDNIYIPSYISKQPFYVSGLDNEEGDSLLHQRARQQEEDKAAQAAALLARGKKAGPARTKWVKGACENCGAMGHKKKDCLERPRKFGAKATGKDIQADRIVRDVKLGYEAKRDVYSAYDPKQYMEVVEEYNMLEEARRALQGDQKTPDGEGADGPEDDKSGFKYDEESDMGRDRATTKQSMRIREDTAKYLLNLDSDSAKYNPKKRALVDAGAIADKSAALFAEESFLRASGEAAEFEKAQRYAWEAQERSGDTSLHLQANPTAGEILRKKESEEREAKRRKRAEELANQYGTQPVISDALRETIKESETFVEYDEAGLIKGAPKKVGKSKYLEDVYINNHTSVWGSWWSDFRWGYACCHSFVKNSYCTGEAGIAASEKADAWDK.

The disordered stretch occupies residues 1 to 34; that stretch reads MPPPPPNRREQATAAPSSTDKSETGAGAARKEDN. The CCHC-type zinc finger occupies 95–112; the sequence is GACENCGAMGHKKKDCLE. 2 stretches are compositionally biased toward basic and acidic residues: residues 168-179 and 188-213; these read RRALQGDQKTPD and DDKSGFKYDEESDMGRDRATTKQSMR. Residues 168-213 are disordered; sequence RRALQGDQKTPDGEGADGPEDDKSGFKYDEESDMGRDRATTKQSMR.

The protein belongs to the SLU7 family. In terms of assembly, associated with the spliceosome.

Its subcellular location is the nucleus. Functionally, involved in pre-mRNA splicing. The protein is Pre-mRNA-splicing factor slu-7 (slu-7) of Neurospora crassa (strain ATCC 24698 / 74-OR23-1A / CBS 708.71 / DSM 1257 / FGSC 987).